We begin with the raw amino-acid sequence, 457 residues long: Multidrug resistance protein MdtK (457 aa).

12 helical membrane passes run leucine 11–valine 31, alanine 46–leucine 66, tryptophan 93–isoleucine 113, alanine 127–leucine 147, glycine 160–tyrosine 180, leucine 188–methionine 208, leucine 243–valine 263, leucine 283–phenylalanine 301, tyrosine 316–phenylalanine 336, leucine 357–valine 377, isoleucine 387–glycine 407, and proline 418–leucine 438.

It belongs to the multi antimicrobial extrusion (MATE) (TC 2.A.66.1) family. MdtK subfamily.

Its subcellular location is the cell inner membrane. Multidrug efflux pump that functions probably as a Na(+)/drug antiporter. The chain is Multidrug resistance protein MdtK from Yersinia pseudotuberculosis serotype IB (strain PB1/+).